The chain runs to 215 residues: Pyrrolidone-carboxylate peptidase (215 aa).

Catalysis depends on residues E80, C143, and H167.

It belongs to the peptidase C15 family. As to quaternary structure, homotetramer.

It is found in the cytoplasm. It catalyses the reaction Release of an N-terminal pyroglutamyl group from a polypeptide, the second amino acid generally not being Pro.. Its function is as follows. Removes 5-oxoproline from various penultimate amino acid residues except L-proline. In Brevibacillus brevis (strain 47 / JCM 6285 / NBRC 100599), this protein is Pyrrolidone-carboxylate peptidase.